A 458-amino-acid chain; its full sequence is tRNA modification GTPase MnmE (458 aa).

(6S)-5-formyl-5,6,7,8-tetrahydrofolate-binding residues include Arg22, Glu84, and Arg123. Residues 220-379 form the TrmE-type G domain; it reads GIATAIIGRP…LEKAIADLFF (160 aa). Asn230 is a binding site for K(+). Residues 230 to 235, 249 to 255, and 274 to 277 each bind GTP; these read NVGKSS, TDIAGTT, and DTAG. Ser234 contacts Mg(2+). The K(+) site is built by Thr249, Ile251, and Thr254. Thr255 is a Mg(2+) binding site. (6S)-5-formyl-5,6,7,8-tetrahydrofolate is bound at residue Lys458.

It belongs to the TRAFAC class TrmE-Era-EngA-EngB-Septin-like GTPase superfamily. TrmE GTPase family. Homodimer. Heterotetramer of two MnmE and two MnmG subunits. It depends on K(+) as a cofactor.

Its subcellular location is the cytoplasm. Exhibits a very high intrinsic GTPase hydrolysis rate. Involved in the addition of a carboxymethylaminomethyl (cmnm) group at the wobble position (U34) of certain tRNAs, forming tRNA-cmnm(5)s(2)U34. In Bacillus cytotoxicus (strain DSM 22905 / CIP 110041 / 391-98 / NVH 391-98), this protein is tRNA modification GTPase MnmE.